We begin with the raw amino-acid sequence, 368 residues long: L-cysteine desulfhydrase Cds1 (368 aa).

Lys-67 carries the N6-(pyridoxal phosphate)lysine modification. Residues 203–207 and Ser-299 each bind pyridoxal 5'-phosphate; that span reads GTGGT.

The protein belongs to the cysteine synthase/cystathionine beta-synthase family. Cds1 subfamily. The cofactor is pyridoxal 5'-phosphate.

It localises to the cytoplasm. The catalysed reaction is L-cysteine + H2O = hydrogen sulfide + pyruvate + NH4(+) + H(+). In terms of biological role, a cysteine desulfhydrase that generates hydrogen sulfide, H(2)S. The H(2)S produced by this enzyme stimulates respiration in M.tuberculosis, mediated primarily via cytochrome bd with a lesser contribution from cytochrome bc1/aa3. H(2)S modulates the balance between respiration and glycolysis, and also contributes to redox homeostasis. Probably eliminates toxic levels of Cys (which can induce oxidative stress). The polypeptide is L-cysteine desulfhydrase Cds1 (Mycobacterium tuberculosis (strain ATCC 25177 / H37Ra)).